Reading from the N-terminus, the 380-residue chain is Alcohol dehydrogenase 3 (380 aa).

Residues C48, T50, H70, C100, C103, C106, C114, and C178 each contribute to the Zn(2+) site. An alcohol is bound by residues T50 and H70. T50 serves as a coordination point for NAD(+). Residues 203 to 208, D227, R232, T273, V296, 296 to 298, F323, and R373 contribute to the NAD(+) site; these read GLGAVG and VGV.

It belongs to the zinc-containing alcohol dehydrogenase family. In terms of assembly, homodimer. Homotetramer. Requires Zn(2+) as cofactor.

The protein resides in the cytoplasm. The catalysed reaction is a primary alcohol + NAD(+) = an aldehyde + NADH + H(+). The enzyme catalyses a secondary alcohol + NAD(+) = a ketone + NADH + H(+). The chain is Alcohol dehydrogenase 3 (ADH3) from Solanum tuberosum (Potato).